The sequence spans 257 residues: Pyridoxine 5'-phosphate synthase (257 aa).

Asparagine 6 serves as a coordination point for 3-amino-2-oxopropyl phosphate. Position 8 to 9 (8 to 9) interacts with 1-deoxy-D-xylulose 5-phosphate; that stretch reads DH. 3-amino-2-oxopropyl phosphate is bound at residue arginine 17. Histidine 41 acts as the Proton acceptor in catalysis. Residues arginine 43 and histidine 48 each contribute to the 1-deoxy-D-xylulose 5-phosphate site. The active-site Proton acceptor is glutamate 68. Threonine 98 contacts 1-deoxy-D-xylulose 5-phosphate. The active-site Proton donor is the histidine 210. 3-amino-2-oxopropyl phosphate contacts are provided by residues glycine 211 and 232–233; that span reads GQ.

This sequence belongs to the PNP synthase family. In terms of assembly, homooctamer; tetramer of dimers.

It is found in the cytoplasm. The enzyme catalyses 3-amino-2-oxopropyl phosphate + 1-deoxy-D-xylulose 5-phosphate = pyridoxine 5'-phosphate + phosphate + 2 H2O + H(+). It participates in cofactor biosynthesis; pyridoxine 5'-phosphate biosynthesis; pyridoxine 5'-phosphate from D-erythrose 4-phosphate: step 5/5. Functionally, catalyzes the complicated ring closure reaction between the two acyclic compounds 1-deoxy-D-xylulose-5-phosphate (DXP) and 3-amino-2-oxopropyl phosphate (1-amino-acetone-3-phosphate or AAP) to form pyridoxine 5'-phosphate (PNP) and inorganic phosphate. The sequence is that of Pyridoxine 5'-phosphate synthase from Campylobacter jejuni subsp. jejuni serotype O:6 (strain 81116 / NCTC 11828).